We begin with the raw amino-acid sequence, 319 residues long: GTP 3',8-cyclase (319 aa).

The Radical SAM core domain occupies 4-219 (KHGRKINYLR…SKHSDLIPVE (216 aa)). Residue R13 participates in GTP binding. [4Fe-4S] cluster-binding residues include C20 and C24. Residue Y26 coordinates S-adenosyl-L-methionine. Residue C27 participates in [4Fe-4S] cluster binding. R63 contacts GTP. G67 provides a ligand contact to S-adenosyl-L-methionine. T94 contacts GTP. Residue S118 coordinates S-adenosyl-L-methionine. Residue K155 coordinates GTP. M189 is an S-adenosyl-L-methionine binding site. Positions 249 and 252 each coordinate [4Fe-4S] cluster. 254 to 256 (RVR) serves as a coordination point for GTP. C266 provides a ligand contact to [4Fe-4S] cluster.

It belongs to the radical SAM superfamily. MoaA family. In terms of assembly, monomer and homodimer. [4Fe-4S] cluster is required as a cofactor.

The catalysed reaction is GTP + AH2 + S-adenosyl-L-methionine = (8S)-3',8-cyclo-7,8-dihydroguanosine 5'-triphosphate + 5'-deoxyadenosine + L-methionine + A + H(+). Its pathway is cofactor biosynthesis; molybdopterin biosynthesis. Catalyzes the cyclization of GTP to (8S)-3',8-cyclo-7,8-dihydroguanosine 5'-triphosphate. This is GTP 3',8-cyclase from Clostridium botulinum (strain Okra / Type B1).